The following is a 211-amino-acid chain: DNA-directed RNA polymerases I, II, and III subunit RPABC1 (211 aa).

Belongs to the archaeal Rpo5/eukaryotic RPB5 RNA polymerase subunit family. As to quaternary structure, component of the RNA polymerase I (Pol I), RNA polymerase II (Pol II) and RNA polymerase III (Pol III) complexes consisting of at least 13, 12 and 17 subunits, respectively. In RNA Pol II, this subunit is present in 2-fold molar excess over the other subunits.

The protein resides in the nucleus. In terms of biological role, DNA-dependent RNA polymerase catalyzes the transcription of DNA into RNA using the four ribonucleoside triphosphates as substrates. Common component of RNA polymerases I, II and III which synthesize ribosomal RNA precursors, mRNA precursors and many functional non-coding RNAs, and small RNAs, such as 5S rRNA and tRNAs, respectively. Pol II is the central component of the basal RNA polymerase II transcription machinery. Pols are composed of mobile elements that move relative to each other. In Pol II, RPB5 is part of the lower jaw surrounding the central large cleft and thought to grab the incoming DNA template. Seems to be the major component in this process. The sequence is that of DNA-directed RNA polymerases I, II, and III subunit RPABC1 (rpb-5) from Caenorhabditis elegans.